The following is a 495-amino-acid chain: Oxidoreductase AflY (495 aa).

A disordered region spans residues 1–22; sequence MGSHAPAVAGKPDPKKGPYQAT.

Belongs to the questin oxidase family.

It participates in mycotoxin biosynthesis; aflatoxin biosynthesis. In terms of biological role, oxidoreductase; part of the gene cluster that mediates the biosynthesis of aflatoxins, a group of polyketide-derived furanocoumarins, and part of the most toxic and carcinogenic compounds among the known mycotoxins. The four major aflatoxins produced by A.parasiticus are aflatoxin B1 (AFB1), aflatoxin B2 (AFB2), aflatoxin G1 (AFG1) and aflatoxin G2 (AFG2). Within the aflatoxin pathway, the oxidoreductase aflY seems to be involved in the conversion of versicolorin A (VERA) to demethylsterigmatocystin (DMST), through probable Baeyer-Villiger oxidation required for the formation of the xanthone ring. The biosynthesis of aflatoxins begins with the norsolorinic acid synthase aflC that combines a hexanoyl starter unit produced by the fatty acid synthase aflA/aflB and 7 malonyl-CoA extender units to synthesize the precursor NOR. The second step is the conversion of NOR to averantin and requires the norsolorinic acid ketoreductase aflD, which catalyzes the dehydration of norsolorinic acid to form (1'S)-averantin. The norsolorinic acid reductases aflE and aflF may also play a role in the conversion of NOR to AVN. The cytochrome P450 monooxygenase aflG then catalyzes the hydroxylation of AVN to 5'hydroxyaverantin (HAVN). The next step is performed by the 5'-hydroxyaverantin dehydrogenase aflH that transforms HAVN to 5'-oxoaverantin (OAVN) which is further converted to averufin (AVF) by aflK that plays a dual role in the pathway, as a 5'-oxoaverantin cyclase that mediates conversion of 5'-oxoaverantin, as well as a versicolorin B synthase in a later step in the pathway. The averufin oxidase aflI catalyzes the conversion of AVF to versiconal hemiacetal acetate (VHA). VHA is then the substrate for the versiconal hemiacetal acetate esterase aflJ to yield versiconal (VAL). Versicolorin B synthase aflK then converts VAL to versicolorin B (VERB) by closing the bisfuran ring of aflatoxin which is required for DNA-binding, thus giving to aflatoxin its activity as a mutagen. Then, the activity of the versicolorin B desaturase aflL leads to versicolorin A (VERA). A branch point starts from VERB since it can also be converted to dihydrodemethylsterigmatocystin (DMDHST), probably also by aflL, VERA being a precursor for aflatoxins B1 and G1, and DMDHST for aflatoxins B2 and G2. Next, the versicolorin reductase aflM and the cytochrome P450 monooxygenase aflN are involved in conversion of VERA to demethylsterigmatocystin (DMST). AflX and aflY seem also involved in this step, through probable aflX-mediated epoxide ring-opening step following versicolorin A oxidation and aflY-mediated Baeyer-Villiger oxidation required for the formation of the xanthone ring. The methyltransferase aflO then leads to the modification of DMST to sterigmatocystin (ST), and of DMDHST to dihydrosterigmatocystin (DHST). Both ST and DHST are then substrates of the O-methyltransferase aflP to yield O-methylsterigmatocystin (OMST) and dihydro-O-methylsterigmatocystin (DHOMST), respectively. Finally OMST is converted to aflatoxins B1 and G1, and DHOMST to aflatoxins B2 and G2, via the action of several enzymes including O-methylsterigmatocystin oxidoreductase aflQ, the cytochrome P450 monooxygenase aflU, but also the NADH-dependent flavin oxidoreductase nadA which is specifically required for the synthesis of AFG1. The protein is Oxidoreductase AflY of Aspergillus parasiticus (strain ATCC 56775 / NRRL 5862 / SRRC 143 / SU-1).